A 145-amino-acid chain; its full sequence is UPF0299 membrane protein plu1549 (145 aa).

The next 4 helical transmembrane spans lie at 6–26 (VLIV…CLLT), 34–54 (LPII…LLAF), 65–85 (GCSL…VGVM), and 95–115 (IIPI…IVAY).

It belongs to the UPF0299 family.

It is found in the cell inner membrane. This chain is UPF0299 membrane protein plu1549, found in Photorhabdus laumondii subsp. laumondii (strain DSM 15139 / CIP 105565 / TT01) (Photorhabdus luminescens subsp. laumondii).